We begin with the raw amino-acid sequence, 339 residues long: Uracil nucleotide/cysteinyl leukotriene receptor (339 aa).

At 1–36 (MNGLEAALPSLTDNSSLAYSEQCGQETPLENMLFAC) the chain is on the extracellular side. N-linked (GlcNAc...) asparagine glycosylation occurs at asparagine 14. Residues 37–57 (FYLLDFILAFVGNALALWLFI) form a helical membrane-spanning segment. Over 58–64 (WDHKSGT) the chain is Cytoplasmic. Residues 65–85 (PANVFLMHLAVADLSCVLVLP) traverse the membrane as a helical segment. Residues 86–105 (TRLVYHFSGNHWPFGEIPCR) are Extracellular-facing. Cysteine 104 and cysteine 181 are disulfide-bonded. The chain crosses the membrane as a helical span at residues 106–126 (LTGFLFYLNMYASIYFLTCIS). Over 127 to 147 (ADRFLAIVHPVKSLKLRRPLY) the chain is Cytoplasmic. The chain crosses the membrane as a helical span at residues 148 to 168 (AHLACAFLWIVVAVAMAPLLV). The Extracellular portion of the chain corresponds to 169-195 (SPQTVQTNHTVVCLQLYREKASHHALA). A glycan (N-linked (GlcNAc...) asparagine) is linked at asparagine 176. Residues 196–216 (SLAVAFTFPFITTVTCYLLII) form a helical membrane-spanning segment. The Cytoplasmic segment spans residues 217–232 (RSLRQGPRIEKHLKNK). A helical membrane pass occupies residues 233–253 (AVRMIAMVLAIFLICFVPYHI). Over 254–280 (HRSVYVLHYRGGGTSCAAQRALALGNR) the chain is Extracellular. A helical membrane pass occupies residues 281–301 (ITSCLTSLNGALDPVMYFFVA). The Cytoplasmic portion of the chain corresponds to 302–339 (EKFRHALCNLLCSKRLTGPPPSFEGKTNESSLSARSEL).

Belongs to the G-protein coupled receptor 1 family.

It is found in the cell membrane. Its function is as follows. Dual specificity receptor for uracil nucleotides and cysteinyl leukotrienes (CysLTs). Signals through G(i) and inhibition of adenylyl cyclase. May mediate brain damage by nucleotides and CysLTs following ischemia. The protein is Uracil nucleotide/cysteinyl leukotriene receptor of Mus musculus (Mouse).